Here is a 606-residue protein sequence, read N- to C-terminus: MWLICMAALFDMLYCSEVEESMERIFEMLHGACGLETEEMRGVLKRMSDFRTYVLFPLILHDDKLVVSPDMGYKDIEKEERIYVEKIIKKLPSLVWQSMVFLYIPEHDNWILGLMNTVFDTSSSRFSDSVGIYKKSRGRSEMRLVDLMMGMFRNNVSMMEKFGRGLAHKAEVKMKEIPNEISKEEREKQKEVLDKIREYGKSLGTREKQEQILKAQEIVFDTCIYLWRREEDRISFVLKVYLRSLQCKMLGLNKGALADDVNQEVSLLHSISHEILINTHNEYGIEVTAELIKRLFLEYMNIDEEYVSNVVEDVKKKKEEERREEEEEKKRKEEVVQRNVEELLRGEEEEKKGAKAKRKSKKKKKGSKKPEEKESEVEEVSENREAQEMEDSREACSKERNKEQKNESGRCYYKLHKRTLLWREEPEKIKKKWDSGTEERWKGKSIGEIREQKELHDISEISQLLKSQDANNFFICTGEYMKNGIKRWKMVAIAVLETRDWKKLGVVEVGLFKDKDEQNVIFHLMFRPTDLGRAGAVVRSALAKVDNMEKVDDTDDSLDISGFTYPKNTRSEVVRGLNEFRVVWRNPKNTAEVIRSLTVMSRPGGN.

Residues 317–401 (KKEEERREEE…SREACSKERN (85 aa)) form a disordered region. Residues 328-353 (EKKRKEEVVQRNVEELLRGEEEEKKG) show a composition bias toward basic and acidic residues. Residues 354–367 (AKAKRKSKKKKKGS) are compositionally biased toward basic residues. Over residues 381 to 401 (SENREAQEMEDSREACSKERN) the composition is skewed to basic and acidic residues.

It belongs to the UPF0329 family.

This Encephalitozoon cuniculi (strain GB-M1) (Microsporidian parasite) protein is UPF0329 protein ECU06_0090.